A 331-amino-acid polypeptide reads, in one-letter code: Large ribosomal subunit protein uL3 (331 aa).

The protein belongs to the universal ribosomal protein uL3 family. As to quaternary structure, part of the 50S ribosomal subunit. Forms a cluster with proteins L14 and L24e.

In terms of biological role, one of the primary rRNA binding proteins, it binds directly near the 3'-end of the 23S rRNA, where it nucleates assembly of the 50S subunit. The sequence is that of Large ribosomal subunit protein uL3 from Archaeoglobus fulgidus (strain ATCC 49558 / DSM 4304 / JCM 9628 / NBRC 100126 / VC-16).